The chain runs to 91 residues: Small ribosomal subunit protein uS19 (91 aa).

The protein belongs to the universal ribosomal protein uS19 family.

Protein S19 forms a complex with S13 that binds strongly to the 16S ribosomal RNA. The polypeptide is Small ribosomal subunit protein uS19 (Ralstonia nicotianae (strain ATCC BAA-1114 / GMI1000) (Ralstonia solanacearum)).